Consider the following 166-residue polypeptide: Coiled-coil domain-containing protein 12 (166 aa).

Residue Met-1 is modified to N-acetylmethionine. A disordered region spans residues 1 to 56 (MEATTAGVGRLEEEALRRKERLKALREKTGRKDKEDGEPKTKHLREEEEEGEKHRE). Residues 8-28 (VGRLEEEALRRKERLKALREK) adopt a coiled-coil conformation. A compositionally biased stretch (basic and acidic residues) spans 10-56 (RLEEEALRRKERLKALREKTGRKDKEDGEPKTKHLREEEEEGEKHRE). At Lys-53 the chain carries N6-acetyllysine. Lys-94 participates in a covalent cross-link: Glycyl lysine isopeptide (Lys-Gly) (interchain with G-Cter in SUMO2). Residues 117 to 144 (KRDVAKKLEKLKKRTQRAIAELIRERLK) are a coiled coil. Residues 147–166 (EDSLASAVDAATEQKTCDSD) form a disordered region. Phosphoserine occurs at positions 149 and 165.

The sequence is that of Coiled-coil domain-containing protein 12 (CCDC12) from Homo sapiens (Human).